An 85-amino-acid chain; its full sequence is MAAERTQNLQDTFLNHVRKSKTPLTIFLVNGVKLQGVVTWFDNFCVLLRRDGHSQLVYKHAISTIMPGHPVQLFDPTDEVASEKA.

The Sm domain occupies 11–71 (DTFLNHVRKS…ISTIMPGHPV (61 aa)).

This sequence belongs to the Hfq family. Homohexamer.

RNA chaperone that binds small regulatory RNA (sRNAs) and mRNAs to facilitate mRNA translational regulation in response to envelope stress, environmental stress and changes in metabolite concentrations. Also binds with high specificity to tRNAs. Seems to be involved in the regulation of NifA. This is RNA-binding protein Hfq from Azorhizobium caulinodans (strain ATCC 43989 / DSM 5975 / JCM 20966 / LMG 6465 / NBRC 14845 / NCIMB 13405 / ORS 571).